Here is an 813-residue protein sequence, read N- to C-terminus: Phosphoribosylformylglycinamidine synthase subunit PurL (813 aa).

His-56 is an active-site residue. Residues Tyr-59 and Lys-103 each contribute to the ATP site. Position 105 (Glu-105) interacts with Mg(2+). Substrate contacts are provided by residues 106-109 (SHNH) and Arg-128. Catalysis depends on His-107, which acts as the Proton acceptor. Asp-129 provides a ligand contact to Mg(2+). Gln-253 serves as a coordination point for substrate. Asp-281 serves as a coordination point for Mg(2+). 325-327 (ESQ) provides a ligand contact to substrate. ATP contacts are provided by Asn-511 and Gly-548. Asn-549 is a Mg(2+) binding site. Ser-551 provides a ligand contact to substrate.

It belongs to the FGAMS family. As to quaternary structure, monomer. Part of the FGAM synthase complex composed of 1 PurL, 1 PurQ and 2 PurS subunits.

Its subcellular location is the cytoplasm. The enzyme catalyses N(2)-formyl-N(1)-(5-phospho-beta-D-ribosyl)glycinamide + L-glutamine + ATP + H2O = 2-formamido-N(1)-(5-O-phospho-beta-D-ribosyl)acetamidine + L-glutamate + ADP + phosphate + H(+). Its pathway is purine metabolism; IMP biosynthesis via de novo pathway; 5-amino-1-(5-phospho-D-ribosyl)imidazole from N(2)-formyl-N(1)-(5-phospho-D-ribosyl)glycinamide: step 1/2. Part of the phosphoribosylformylglycinamidine synthase complex involved in the purines biosynthetic pathway. Catalyzes the ATP-dependent conversion of formylglycinamide ribonucleotide (FGAR) and glutamine to yield formylglycinamidine ribonucleotide (FGAM) and glutamate. The FGAM synthase complex is composed of three subunits. PurQ produces an ammonia molecule by converting glutamine to glutamate. PurL transfers the ammonia molecule to FGAR to form FGAM in an ATP-dependent manner. PurS interacts with PurQ and PurL and is thought to assist in the transfer of the ammonia molecule from PurQ to PurL. The chain is Phosphoribosylformylglycinamidine synthase subunit PurL from Corynebacterium jeikeium (strain K411).